A 565-amino-acid chain; its full sequence is Mediator of RNA polymerase II transcription subunit 17 (565 aa).

Residues 138–152 (TSLNSDRLGQDSNDN) are compositionally biased toward polar residues. Residues 138-160 (TSLNSDRLGQDSNDNQESKATDS) form a disordered region.

It belongs to the Mediator complex subunit 17 family. Component of the Mediator complex.

It localises to the nucleus. In terms of biological role, component of the Mediator complex, a coactivator involved in the regulated transcription of nearly all RNA polymerase II-dependent genes. Mediator functions as a bridge to convey information from gene-specific regulatory proteins to the basal RNA polymerase II transcription machinery. Mediator is recruited to promoters by direct interactions with regulatory proteins and serves as a scaffold for the assembly of a functional preinitiation complex with RNA polymerase II and the general transcription factors. This chain is Mediator of RNA polymerase II transcription subunit 17 (SRB4), found in Candida albicans (strain SC5314 / ATCC MYA-2876) (Yeast).